A 301-amino-acid polypeptide reads, in one-letter code: Thioredoxin-related transmembrane protein 2-A (301 aa).

An N-terminal signal peptide occupies residues 1–19; it reads MSLIRGLISTIYYLPKIYK. At 20–111 the chain is on the extracellular side; that stretch reads WFYRPYYFLS…VVLFFRVDLR (92 aa). Residues 112-132 form a helical membrane-spanning segment; the sequence is FGLLYLTLCVVFLITCKPPAY. The Thioredoxin domain maps to 122–269; it reads VFLITCKPPA…IFQKYKKFSK (148 aa). Residues 133–301 are Cytoplasmic-facing; the sequence is MGPENIKYFR…EEDSESKKDK (169 aa). The interval 268–301 is disordered; that stretch reads SKGEKPEEPQPVLEEESESPLEEEEEDSESKKDK. The segment covering 280–295 has biased composition (acidic residues); the sequence is LEEESESPLEEEEEDS. The short motif at 298–301 is the Di-lysine motif element; the sequence is KKDK.

In terms of assembly, monomer. Homodimer; disulfide-linked. Occurs in both reduced and oxidized monomeric form. Oxidative conditions increase homodimerization.

It localises to the endoplasmic reticulum membrane. Its subcellular location is the mitochondrion membrane. Functionally, endoplasmic reticulum and mitochondria-associated protein that probably functions as a regulator of cellular redox state and thereby regulates protein post-translational modification, protein folding and mitochondrial activity. The polypeptide is Thioredoxin-related transmembrane protein 2-A (Danio rerio (Zebrafish)).